The chain runs to 385 residues: tRNA-specific 2-thiouridylase MnmA (385 aa).

ATP-binding positions include 8 to 15 and leucine 34; that span reads AMSGGVDS. Cysteine 102 acts as the Nucleophile in catalysis. Residues cysteine 102 and cysteine 200 are joined by a disulfide bond. Glycine 126 is a binding site for ATP. An interaction with tRNA region spans residues 150-152; sequence KDQ. Catalysis depends on cysteine 200, which acts as the Cysteine persulfide intermediate. The interaction with tRNA stretch occupies residues 307–308; it reads RY.

It belongs to the MnmA/TRMU family.

It localises to the cytoplasm. The catalysed reaction is S-sulfanyl-L-cysteinyl-[protein] + uridine(34) in tRNA + AH2 + ATP = 2-thiouridine(34) in tRNA + L-cysteinyl-[protein] + A + AMP + diphosphate + H(+). Its function is as follows. Catalyzes the 2-thiolation of uridine at the wobble position (U34) of tRNA, leading to the formation of s(2)U34. The protein is tRNA-specific 2-thiouridylase MnmA of Heliobacterium modesticaldum (strain ATCC 51547 / Ice1).